The sequence spans 181 residues: Aminoglycoside 2'-N-acetyltransferase (181 aa).

Residues 11–162 (VHTADLDSET…DGTVFVLPID (152 aa)) enclose the N-acetyltransferase domain. Residues D35 and 82–83 (EG) contribute to the substrate site. CoA-binding positions include 84–86 (VAV) and 91–96 (RGQRLV). Substrate contacts are provided by residues S117 and 151 to 152 (DD).

Belongs to the AAC(2')-I acetyltransferase family. In terms of assembly, homodimer.

Catalyzes the coenzyme A-dependent acetylation of the 2' hydroxyl or amino group of a broad spectrum of aminoglycosides. It confers resistance to aminoglycosides. This is Aminoglycoside 2'-N-acetyltransferase (aac) from Mycobacterium bovis (strain ATCC BAA-935 / AF2122/97).